The chain runs to 1314 residues: Phosphoribosylformylglycinamidine synthase (1314 aa).

Residues 307–318 (GAATGAGGEIRD) and Ala-674 each bind ATP. Mg(2+) is bound by residues Asp-675, Glu-714, Asn-718, and Asp-880. Residue Ser-882 participates in ATP binding. One can recognise a Glutamine amidotransferase type-1 domain in the interval 1063–1314 (IAILREQGVN…LFAGARKALG (252 aa)). The Nucleophile role is filled by Cys-1156. Catalysis depends on residues His-1279 and Glu-1281.

The protein in the N-terminal section; belongs to the FGAMS family. Monomer.

The protein localises to the cytoplasm. It carries out the reaction N(2)-formyl-N(1)-(5-phospho-beta-D-ribosyl)glycinamide + L-glutamine + ATP + H2O = 2-formamido-N(1)-(5-O-phospho-beta-D-ribosyl)acetamidine + L-glutamate + ADP + phosphate + H(+). It functions in the pathway purine metabolism; IMP biosynthesis via de novo pathway; 5-amino-1-(5-phospho-D-ribosyl)imidazole from N(2)-formyl-N(1)-(5-phospho-D-ribosyl)glycinamide: step 1/2. Its function is as follows. Phosphoribosylformylglycinamidine synthase involved in the purines biosynthetic pathway. Catalyzes the ATP-dependent conversion of formylglycinamide ribonucleotide (FGAR) and glutamine to yield formylglycinamidine ribonucleotide (FGAM) and glutamate. This chain is Phosphoribosylformylglycinamidine synthase, found in Neisseria gonorrhoeae (strain ATCC 700825 / FA 1090).